Reading from the N-terminus, the 316-residue chain is MSELVVFKANELAISRYDLTEHETKLILCCVALLNPTIENPTRKERTVSFTYNQYAQMMNISRENAYGVLAKATRELMTRTVEIRNPLVKGFEIFQWTNYAKFSSEKLELVFSEEILPYLFQLKKFIKYNLEHVKSFENKYSMRIYEWLLKELTQKKTHKANIEISLDEFKFMLMLENNYHEFKRLNQWVLKPISKDLNTYSNMKLVVDKRGRPTDTLIFQVELDRQMDLVTELENNQIKMNGDKIPTTITSDSYLHNGLRKTLHDALTAKIQLTSFEAKFLSDMQSKYDLNGSFSWLTQKQRTTLENILAKYGRI.

It belongs to the initiator RepB protein family.

The polypeptide is Replication initiation protein (repA) (Escherichia coli).